Here is a 114-residue protein sequence, read N- to C-terminus: Secretoglobin family 2B member 2 (114 aa).

An N-terminal signal peptide occupies residues 1–23 (MKGTLLLLALLVTGELGFQRTEA).

The protein belongs to the secretoglobin family. As to expression, expressed in lacrimal gland.

The protein resides in the secreted. The protein is Secretoglobin family 2B member 2 (Scgb2b2) of Mus musculus (Mouse).